We begin with the raw amino-acid sequence, 857 residues long: Dynein regulatory complex protein 11 (857 aa).

The IQ domain occupies 206–235 (TKLAALQIQKVWRGFHQCKKTVKEREEEMV). Residues 348–388 (EEKLKKKKKKEDKENKGKKGKKEKKEKKEKKVSLKEKAMKD) are disordered. Residues 365–375 (KKGKKEKKEKK) are compositionally biased toward basic residues. The span at 376 to 387 (EKKVSLKEKAMK) shows a compositional bias: basic and acidic residues. ATP is bound at residue 598 to 605 (GPSGVGKK). The tract at residues 834-857 (SLTVGNKEKEKDKGKKGKRGKKKK) is disordered. Residues 847–857 (GKKGKRGKKKK) are compositionally biased toward basic residues.

This sequence belongs to the AAA ATPase family. DRC11 subfamily. Component of the nexin-dynein regulatory complex (N-DRC).

It localises to the cytoplasm. Its subcellular location is the cytoskeleton. The protein resides in the flagellum axoneme. Component of the nexin-dynein regulatory complex (N-DRC), a key regulator of ciliary/flagellar motility which maintains the alignment and integrity of the distal axoneme and regulates microtubule sliding in motile axonemes. This chain is Dynein regulatory complex protein 11 (Iqca1), found in Mus musculus (Mouse).